The chain runs to 383 residues: Homoserine O-acetyltransferase (383 aa).

In terms of domain architecture, AB hydrolase-1 spans 52-362 (NAILVCHALT…PWGHDAFLLD (311 aa)). Serine 158 serves as the catalytic Nucleophile. Arginine 227 contacts substrate. Active-site residues include aspartate 323 and histidine 356. Residue aspartate 357 coordinates substrate.

This sequence belongs to the AB hydrolase superfamily. MetX family. As to quaternary structure, homodimer.

It is found in the cytoplasm. The catalysed reaction is L-homoserine + acetyl-CoA = O-acetyl-L-homoserine + CoA. It participates in amino-acid biosynthesis; L-methionine biosynthesis via de novo pathway; O-acetyl-L-homoserine from L-homoserine: step 1/1. Its function is as follows. Transfers an acetyl group from acetyl-CoA to L-homoserine, forming acetyl-L-homoserine. This is Homoserine O-acetyltransferase from Symbiobacterium thermophilum (strain DSM 24528 / JCM 14929 / IAM 14863 / T).